Here is a 632-residue protein sequence, read N- to C-terminus: Phosphoglucomutase, chloroplastic (632 aa).

A chloroplast-targeting transit peptide spans M1 to Q72. The alpha-D-glucose 1,6-bisphosphate site is built by R97 and S190. S190 functions as the Phosphoserine intermediate in the catalytic mechanism. S190, D355, D357, and D359 together coordinate Mg(2+). Phosphoserine is present on S190. Alpha-D-glucose 1,6-bisphosphate-binding residues include D359, R360, T423, E442, S444, and K455.

Belongs to the phosphohexose mutase family. As to quaternary structure, monomer. It depends on Mg(2+) as a cofactor.

The protein localises to the plastid. It is found in the chloroplast. It catalyses the reaction alpha-D-glucose 1-phosphate = alpha-D-glucose 6-phosphate. It carries out the reaction O-phospho-L-seryl-[protein] + alpha-D-glucose 1-phosphate = alpha-D-glucose 1,6-bisphosphate + L-seryl-[protein]. The catalysed reaction is alpha-D-glucose 1,6-bisphosphate + L-seryl-[protein] = O-phospho-L-seryl-[protein] + alpha-D-glucose 6-phosphate. Inhibited by the Calvin cycle intermediates fructose-1,6-bisphosphate and ribulose-1,5-bisphosphate. Catalyzes the reversible isomerization of alpha-D-glucose 1-phosphate to alpha-D-glucose 6-phosphate. The mechanism proceeds via the intermediate compound alpha-D-glucose 1,6-bisphosphate. This enzyme participates in both the breakdown and synthesis of glucose. Promotes gravitropic responses, negative in shoots but positive in roots, by facilitating starch granules (statoliths) formation. The sequence is that of Phosphoglucomutase, chloroplastic (PGMP) from Solanum tuberosum (Potato).